A 360-amino-acid chain; its full sequence is UDP-N-acetylglucosamine--N-acetylmuramyl-(pentapeptide) pyrophosphoryl-undecaprenol N-acetylglucosamine transferase (360 aa).

Serine 198 and glutamine 289 together coordinate UDP-N-acetyl-alpha-D-glucosamine.

The protein belongs to the glycosyltransferase 28 family. MurG subfamily.

Its subcellular location is the cell membrane. It catalyses the reaction Mur2Ac(oyl-L-Ala-gamma-D-Glu-L-Lys-D-Ala-D-Ala)-di-trans,octa-cis-undecaprenyl diphosphate + UDP-N-acetyl-alpha-D-glucosamine = beta-D-GlcNAc-(1-&gt;4)-Mur2Ac(oyl-L-Ala-gamma-D-Glu-L-Lys-D-Ala-D-Ala)-di-trans,octa-cis-undecaprenyl diphosphate + UDP + H(+). It participates in cell wall biogenesis; peptidoglycan biosynthesis. In terms of biological role, cell wall formation. Catalyzes the transfer of a GlcNAc subunit on undecaprenyl-pyrophosphoryl-MurNAc-pentapeptide (lipid intermediate I) to form undecaprenyl-pyrophosphoryl-MurNAc-(pentapeptide)GlcNAc (lipid intermediate II). This chain is UDP-N-acetylglucosamine--N-acetylmuramyl-(pentapeptide) pyrophosphoryl-undecaprenol N-acetylglucosamine transferase, found in Streptococcus pyogenes serotype M18 (strain MGAS8232).